Here is a 593-residue protein sequence, read N- to C-terminus: Proteasome-associated ATPase (593 aa).

The stretch at 5 to 94 (DDADSRAARW…KEEIDRLAQP (90 aa)) forms a coiled coil. 281 to 286 (GCGKTL) is a binding site for ATP. The interval 574 to 593 (GKGADAGRSIETASNTGQYL) is disordered. Polar residues predominate over residues 584-593 (ETASNTGQYL). The segment at 592 to 593 (YL) is docks into pockets in the proteasome alpha-ring.

This sequence belongs to the AAA ATPase family. Homohexamer. Assembles into a hexameric ring structure that caps the 20S proteasome core. Strongly interacts with the prokaryotic ubiquitin-like protein Pup through a hydrophobic interface; the interacting region of ARC lies in its N-terminal coiled-coil domain. There is one Pup binding site per ARC hexamer ring. Upon ATP-binding, the C-terminus of ARC interacts with the alpha-rings of the proteasome core, possibly by binding to the intersubunit pockets.

It participates in protein degradation; proteasomal Pup-dependent pathway. In terms of biological role, ATPase which is responsible for recognizing, binding, unfolding and translocation of pupylated proteins into the bacterial 20S proteasome core particle. May be essential for opening the gate of the 20S proteasome via an interaction with its C-terminus, thereby allowing substrate entry and access to the site of proteolysis. Thus, the C-termini of the proteasomal ATPase may function like a 'key in a lock' to induce gate opening and therefore regulate proteolysis. The protein is Proteasome-associated ATPase of Salinispora tropica (strain ATCC BAA-916 / DSM 44818 / JCM 13857 / NBRC 105044 / CNB-440).